Consider the following 499-residue polypeptide: Endoglucanase (499 aa).

A signal peptide spans 1 to 29; it reads MKRSISIFITCLLITLLTMGGMIASPASA. Substrate-binding positions include His-65, 69–70, Tyr-96, and His-131; that span reads WY. Glu-169 serves as the catalytic Proton donor. Tyr-231 contributes to the substrate binding site. Catalysis depends on Glu-257, which acts as the Nucleophile. Substrate-binding positions include 263–264, Trp-291, and 296–298; these read AS and KQE. The 150-residue stretch at 350-499 folds into the CBM3 domain; that stretch reads QENGISVQYR…GKLIWGTEPN (150 aa).

It belongs to the glycosyl hydrolase 5 (cellulase A) family.

It carries out the reaction Endohydrolysis of (1-&gt;4)-beta-D-glucosidic linkages in cellulose, lichenin and cereal beta-D-glucans.. The sequence is that of Endoglucanase (eglS) from Bacillus subtilis (strain 168).